The primary structure comprises 326 residues: Virulence-associated V antigen (326 aa).

The protein resides in the secreted. Its function is as follows. Involved in calcium regulation of yop expression, which includes the export process. This Yersinia pseudotuberculosis serotype I (strain IP32953) protein is Virulence-associated V antigen (lcrV).